The sequence spans 393 residues: Protein TsgA (393 aa).

The next 12 membrane-spanning stretches (helical) occupy residues 11–31 (WISF…GMVM), 51–71 (FLNA…EIIP), 78–98 (FGFI…SLAL), 101–121 (AAMF…TFLI), 134–154 (LLFT…VAAF), 162–182 (WYWV…LTFG), 206–226 (IGVL…LGFI), 245–265 (ALVS…SFIL), 273–293 (ILTV…TGTQ), 298–318 (WFIL…ITLG), 332–352 (FILT…GPIV), and 361–381 (LLTA…LGFV).

The protein belongs to the major facilitator superfamily. TsgA family.

Its subcellular location is the cell inner membrane. In Salmonella schwarzengrund (strain CVM19633), this protein is Protein TsgA.